Here is a 353-residue protein sequence, read N- to C-terminus: Photosystem II D2 protein (353 aa).

An N-acetylthreonine modification is found at T2. Residue T2 is modified to Phosphothreonine. The helical transmembrane segment at 41 to 61 threads the bilayer; the sequence is CAYFAVGGWFTGTTFVTSWYT. H118 provides a ligand contact to chlorophyll a. The helical transmembrane segment at 125–141 threads the bilayer; it reads GFMLRQFELARSVQLRP. Q130 and N143 together coordinate pheophytin a. Residues 153–166 traverse the membrane as a helical segment; it reads VFVSVFLIYPLGQS. H198 is a binding site for chlorophyll a. Residues 208-228 traverse the membrane as a helical segment; that stretch reads AALLCAIHGATVENTLFEDGD. A plastoquinone contacts are provided by H215 and F262. H215 is a Fe cation binding site. H269 provides a ligand contact to Fe cation. A helical membrane pass occupies residues 279 to 295; the sequence is GLWMSALGVVGLALNLR.

This sequence belongs to the reaction center PufL/M/PsbA/D family. In terms of assembly, PSII is composed of 1 copy each of membrane proteins PsbA, PsbB, PsbC, PsbD, PsbE, PsbF, PsbH, PsbI, PsbJ, PsbK, PsbL, PsbM, PsbT, PsbX, PsbY, PsbZ, Psb30/Ycf12, at least 3 peripheral proteins of the oxygen-evolving complex and a large number of cofactors. It forms dimeric complexes. The D1/D2 heterodimer binds P680, chlorophylls that are the primary electron donor of PSII, and subsequent electron acceptors. It shares a non-heme iron and each subunit binds pheophytin, quinone, additional chlorophylls, carotenoids and lipids. There is also a Cl(-1) ion associated with D1 and D2, which is required for oxygen evolution. The PSII complex binds additional chlorophylls, carotenoids and specific lipids. is required as a cofactor.

The protein resides in the plastid. The protein localises to the chloroplast thylakoid membrane. It catalyses the reaction 2 a plastoquinone + 4 hnu + 2 H2O = 2 a plastoquinol + O2. Photosystem II (PSII) is a light-driven water:plastoquinone oxidoreductase that uses light energy to abstract electrons from H(2)O, generating O(2) and a proton gradient subsequently used for ATP formation. It consists of a core antenna complex that captures photons, and an electron transfer chain that converts photonic excitation into a charge separation. The D1/D2 (PsbA/PsbD) reaction center heterodimer binds P680, the primary electron donor of PSII as well as several subsequent electron acceptors. D2 is needed for assembly of a stable PSII complex. The chain is Photosystem II D2 protein from Atropa belladonna (Belladonna).